The primary structure comprises 630 residues: Beta-phellandrene synthase, chloroplastic (630 aa).

Residues 1 to 48 (MALVSSAPKSCLHKSLIRSTHHELKPLRRTIPTLGMCRRGKSFTPSVS) constitute a chloroplast transit peptide. Mg(2+) contacts are provided by Asp-381, Asp-385, and Asp-533. The DDXXD motif motif lies at 381–385 (DDIYD).

Belongs to the terpene synthase family. Tpsd subfamily. Requires Mg(2+) as cofactor. Mn(2+) serves as cofactor. The cofactor is K(+).

It is found in the plastid. It localises to the chloroplast. It carries out the reaction (2E)-geranyl diphosphate = (-)-beta-phellandrene + diphosphate. It functions in the pathway terpene metabolism; oleoresin biosynthesis. In terms of biological role, converts geranyl diphosphate to four products with (-)-(4S)-beta-phellandrene (52%) as the major olefin, and lesser amounts of (-)-(1S,5S)-beta-pinene (34%), (-)-1S,5S-alpha-pinene (8.5%), and (-)-(4S)-limonene (6%). Involved in defensive oleoresin formation in conifers in response to insect attack or other injury. Involved in monoterpene (C10) olefins biosynthesis. The chain is Beta-phellandrene synthase, chloroplastic (ag8) from Abies grandis (Grand fir).